We begin with the raw amino-acid sequence, 224 residues long: Pleckstrin homology domain-containing family B member 2 (224 aa).

The PH domain maps to 2 to 109; sequence AFVKSGWLLR…WKIALQDART (108 aa). Lys-20 serves as a coordination point for a 1,2-diacyl-sn-glycero-3-phospho-L-serine.

The protein resides in the recycling endosome membrane. In terms of biological role, involved in retrograde transport of recycling endosomes. The protein is Pleckstrin homology domain-containing family B member 2 (PLEKHB2) of Gallus gallus (Chicken).